Reading from the N-terminus, the 195-residue chain is Thymidylate kinase (195 aa).

An ATP-binding site is contributed by 7–14 (GIDGSGKT).

This sequence belongs to the thymidylate kinase family.

The catalysed reaction is dTMP + ATP = dTDP + ADP. Functionally, phosphorylation of dTMP to form dTDP in both de novo and salvage pathways of dTTP synthesis. The polypeptide is Thymidylate kinase (tmk) (Aquifex aeolicus (strain VF5)).